A 293-amino-acid polypeptide reads, in one-letter code: Ribosomal protein L11 methyltransferase (293 aa).

The S-adenosyl-L-methionine site is built by threonine 145, glycine 166, aspartate 188, and asparagine 230.

Belongs to the methyltransferase superfamily. PrmA family.

It is found in the cytoplasm. It catalyses the reaction L-lysyl-[protein] + 3 S-adenosyl-L-methionine = N(6),N(6),N(6)-trimethyl-L-lysyl-[protein] + 3 S-adenosyl-L-homocysteine + 3 H(+). In terms of biological role, methylates ribosomal protein L11. This is Ribosomal protein L11 methyltransferase from Actinobacillus pleuropneumoniae serotype 7 (strain AP76).